An 825-amino-acid polypeptide reads, in one-letter code: Putative NAD(+)--arginine ADP-ribosyltransferase Mav (825 aa).

The tract at residues 435–673 (ALKGLKKPPG…SGSDHHLPLH (239 aa)) is disordered. Pro residues-rich tracts occupy residues 443–457 (PGVPKPPEVKPPAAP) and 468–491 (SGKPGPVAPSGKPAPGPADGPLPH). Residues 560 to 579 (PAADTPAPSAPAASMSAASG) are compositionally biased toward low complexity. The segment covering 580-589 (PPMPPTPSLP) has biased composition (pro residues). Residues 590 to 599 (EPASLPSGPS) are compositionally biased toward low complexity. The 176-residue stretch at 650–825 (KNANGHGPHD…GRTIIEMIER (176 aa)) folds into the TR mART core domain. Basic and acidic residues predominate over residues 656-670 (GPHDASLDSGSDHHL). Residues 687-699 (TGPGYQELNFALR), 730-733 (RGTN), and E750 each bind NAD(+). The active site involves R730. Active-site residues include S755 and E795. E795 serves as a coordination point for NAD(+).

This sequence belongs to the Arg-specific ADP-ribosyltransferase family.

Its subcellular location is the secreted. It carries out the reaction L-arginyl-[protein] + NAD(+) = N(omega)-(ADP-D-ribosyl)-L-arginyl-[protein] + nicotinamide + H(+). A probable mono(ADP-ribosyl)transferase, it may ADP-ribosylate Arg in target protein(s). This Mycobacterium avium (strain 104) protein is Putative NAD(+)--arginine ADP-ribosyltransferase Mav.